Consider the following 296-residue polypeptide: Nucleotide-binding protein SSA_0810 (296 aa).

13–20 lines the ATP pocket; the sequence is GMSGAGKT. 63–66 serves as a coordination point for GTP; it reads DMRS. Positions 277–296 are disordered; that stretch reads WPVNSSHRDKNRRKETVNRS. Residues 282–296 are compositionally biased toward basic and acidic residues; sequence SHRDKNRRKETVNRS.

Belongs to the RapZ-like family.

In terms of biological role, displays ATPase and GTPase activities. This Streptococcus sanguinis (strain SK36) protein is Nucleotide-binding protein SSA_0810.